Reading from the N-terminus, the 1383-residue chain is DNA-directed RNA polymerase subunit beta'' (1383 aa).

Residues cysteine 220, cysteine 289, cysteine 296, and cysteine 299 each coordinate Zn(2+).

This sequence belongs to the RNA polymerase beta' chain family. RpoC2 subfamily. In plastids the minimal PEP RNA polymerase catalytic core is composed of four subunits: alpha, beta, beta', and beta''. When a (nuclear-encoded) sigma factor is associated with the core the holoenzyme is formed, which can initiate transcription. Zn(2+) serves as cofactor.

The protein resides in the plastid. It localises to the chloroplast. The enzyme catalyses RNA(n) + a ribonucleoside 5'-triphosphate = RNA(n+1) + diphosphate. Its function is as follows. DNA-dependent RNA polymerase catalyzes the transcription of DNA into RNA using the four ribonucleoside triphosphates as substrates. The sequence is that of DNA-directed RNA polymerase subunit beta'' from Oenothera biennis (German evening primrose).